A 353-amino-acid chain; its full sequence is MEAPRSAPRERERARTTSGSDQVHSWILVTSQVLSAAWRIARAFVMTTLSPLSATFSYFRSLYLYLGHQLKWWIGYLQRKFKRNLSVEAEVDLLSYCAREWKGEAPRARLMRKAYEELFWRHHIKCVRAVKRDNYDALRSVLFQIFSQGLSFPSWMKEKDIVKLPEKLLFSQGCNWIQQYSFGPEKYTGSNVFGKLRKCVELLKLQWTEFSGMRDHHKRGSMCNSLFSDAILECKLYEALKFLMLYQVTEAYEQMKTNKVIPSLFRLLFSRESSPDPLSFMMNHLNSIGDTCGLDQIDMFILGYSLQVKIKVFRLFKFNSRDFAVCYPEEPLREWPEISLLTENGHHYHIPVF.

Positions 1-80 (MEAPRSAPRE…KWWIGYLQRK (80 aa)) are required for membrane binding. An OTU domain is found at 125 to 353 (KCVRAVKRDN…NGHHYHIPVF (229 aa)).

Belongs to the peptidase C65 family. Otulin subfamily. As to quaternary structure, does not bind ubiquitin or ubiquitin-like proteins.

The protein resides in the cytoplasm. The protein localises to the endoplasmic reticulum membrane. It localises to the nucleus envelope. Lacks deubiquitinase activity. This Mus musculus (Mouse) protein is Inactive ubiquitin thioesterase OTULINL.